A 388-amino-acid polypeptide reads, in one-letter code: Mannitol-1-phosphate 5-dehydrogenase (388 aa).

5-16 (AIQFGGGNIGRG) provides a ligand contact to NAD(+). Residue Lys213 is part of the active site.

Belongs to the mannitol dehydrogenase family. Monomer.

It catalyses the reaction D-mannitol 1-phosphate + NAD(+) = beta-D-fructose 6-phosphate + NADH + H(+). Its function is as follows. Catalyzes the NAD(H)-dependent interconversion of D-fructose 6-phosphate and D-mannitol 1-phosphate in the mannitol metabolic pathway. This is Mannitol-1-phosphate 5-dehydrogenase (mpdA) from Neosartorya fischeri (strain ATCC 1020 / DSM 3700 / CBS 544.65 / FGSC A1164 / JCM 1740 / NRRL 181 / WB 181) (Aspergillus fischerianus).